A 271-amino-acid chain; its full sequence is Tryptophan synthase alpha chain (271 aa).

Active-site proton acceptor residues include Glu59 and Asp70.

The protein belongs to the TrpA family. Tetramer of two alpha and two beta chains.

It carries out the reaction (1S,2R)-1-C-(indol-3-yl)glycerol 3-phosphate + L-serine = D-glyceraldehyde 3-phosphate + L-tryptophan + H2O. It participates in amino-acid biosynthesis; L-tryptophan biosynthesis; L-tryptophan from chorismate: step 5/5. In terms of biological role, the alpha subunit is responsible for the aldol cleavage of indoleglycerol phosphate to indole and glyceraldehyde 3-phosphate. The protein is Tryptophan synthase alpha chain of Methanosarcina mazei (strain ATCC BAA-159 / DSM 3647 / Goe1 / Go1 / JCM 11833 / OCM 88) (Methanosarcina frisia).